A 490-amino-acid chain; its full sequence is Sulfate adenylyltransferase (490 aa).

An N-terminal region spans residues 1–165; that stretch reads MTKALLKDLN…LQAVTPIRHF (165 aa). The tract at residues 166 to 390 is catalytic; that stretch reads DFVEYRYSPA…LRQSYPPKYS (225 aa). Q193 serves as a coordination point for sulfate. ATP-binding positions include 193–196 and 287–290; these read QTRN and GRDH. Catalysis depends on residues T194, R195, and N196. R195 is a sulfate binding site. A291 is a sulfate binding site. M329 provides a ligand contact to ATP. T356 is subject to Phosphothreonine. The interval 391-490 is required for oligomerization; adenylyl-sulfate kinase-like; that stretch reads QGFVLAVPAT…LSQLSDEGYL (100 aa).

This sequence belongs to the sulfate adenylyltransferase family. Homohexamer. Dimer of trimers.

Its subcellular location is the cytoplasm. The enzyme catalyses sulfate + ATP + H(+) = adenosine 5'-phosphosulfate + diphosphate. Its pathway is sulfur metabolism; hydrogen sulfide biosynthesis; sulfite from sulfate: step 1/3. In terms of biological role, catalyzes the first intracellular reaction of sulfate assimilation, forming adenosine-5'-phosphosulfate (APS) from inorganic sulfate and ATP. Plays an important role in sulfate activation as a component of the biosynthesis pathway of sulfur-containing amino acids. The chain is Sulfate adenylyltransferase (sua1) from Schizosaccharomyces pombe (strain 972 / ATCC 24843) (Fission yeast).